We begin with the raw amino-acid sequence, 283 residues long: 2-hydroxy-6-oxononadienedioate/2-hydroxy-6-oxononatrienedioate hydrolase (283 aa).

Positions 35-269 (VVVMFHGSGP…KCGHWAQWEH (235 aa)) constitute an AB hydrolase-1 domain. Residue H263 is the Proton acceptor of the active site.

Belongs to the AB hydrolase superfamily. MhpC family. Homodimer.

The catalysed reaction is (2Z,4E)-2-hydroxy-6-oxonona-2,4-dienedioate + H2O = (2Z)-2-hydroxypenta-2,4-dienoate + succinate + H(+). It carries out the reaction (2Z,4E,7E)-2-hydroxy-6-oxonona-2,4,7-trienedioate + H2O = (2Z)-2-hydroxypenta-2,4-dienoate + fumarate + H(+). The protein operates within aromatic compound metabolism; 3-phenylpropanoate degradation. In terms of biological role, catalyzes the cleavage of the C5-C6 bond of 2-hydroxy-6-oxononadienedioate and 2-hydroxy-6-oxononatrienedioate, a dienol ring fission product of the bacterial meta-cleavage pathway for degradation of phenylpropionic acid. The protein is 2-hydroxy-6-oxononadienedioate/2-hydroxy-6-oxononatrienedioate hydrolase of Pseudomonas sp.